A 177-amino-acid polypeptide reads, in one-letter code: Cytochrome c-type biogenesis protein CcmE (177 aa).

Topologically, residues 1–8 are cytoplasmic; it reads MNPRRKSR. A helical; Signal-anchor for type II membrane protein transmembrane segment spans residues 9–29; that stretch reads LKVVMAVLSGLAVAVGLTLYA. Residues 30–177 lie on the Periplasmic side of the membrane; sequence LSQNIDLFYT…QISQPFGENK (148 aa). Positions 131 and 135 each coordinate heme. The segment at 134–177 is disordered; that stretch reads NYMPPELGDQMKKQHQPMGISEADLKGKSERDATQISQPFGENK. Over residues 156-166 the composition is skewed to basic and acidic residues; that stretch reads ADLKGKSERDA. Polar residues predominate over residues 167–177; that stretch reads TQISQPFGENK.

It belongs to the CcmE/CycJ family.

The protein localises to the cell inner membrane. Its function is as follows. Heme chaperone required for the biogenesis of c-type cytochromes. Transiently binds heme delivered by CcmC and transfers the heme to apo-cytochromes in a process facilitated by CcmF and CcmH. The chain is Cytochrome c-type biogenesis protein CcmE from Glaesserella parasuis serovar 5 (strain SH0165) (Haemophilus parasuis).